The sequence spans 112 residues: Iron-sulfur cluster assembly protein CyaY (112 aa).

The protein belongs to the frataxin family.

Functionally, involved in iron-sulfur (Fe-S) cluster assembly. May act as a regulator of Fe-S biogenesis. This Herminiimonas arsenicoxydans protein is Iron-sulfur cluster assembly protein CyaY.